Reading from the N-terminus, the 197-residue chain is Tic20 family protein Ycf60 (197 aa).

5 helical membrane passes run 3 to 23 (IIIA…GVGV), 47 to 66 (FGYY…PDVL), 81 to 101 (LVVV…MSYF), 118 to 138 (VSQA…LNAL), and 141 to 161 (MILM…LTMG).

The protein belongs to the Tic20 family.

It localises to the plastid. The protein localises to the chloroplast membrane. This chain is Tic20 family protein Ycf60 (ycf60), found in Cyanidioschyzon merolae (strain NIES-3377 / 10D) (Unicellular red alga).